The following is a 501-amino-acid chain: MSTANKKPTESVSLNAFKQPKAFYLIFSIELWERFGYYGLQGIMAVYLVKQLGMSEADSITLFSSFSALVYGLVAIGGWLGDKILGTKRVIMLGAVVLAIGYALVAWSGHDAGIVYMGMAAIAVGNGLFKANPSSLLSTCYAKDDPRLDGAFTMYYMSVNIGSFFSMLATPWLAARYGWSTAFALSVVGMLITVVNFAFCQRWVKSYGSKPDFEPINFRNLLLTIVGIVVLIAVATWLLHNQDIARMVLGVIALGIVIIFGKEAFSMHGAARRKMIVAFILMLQAIIFFVLYSQMPTSLNFFAIRNVEHSILGIAFEPEQYQALNPFWIIIGSPILAAIYNRMGDTLPMPMKFAIGMVLCSGAFLILPLGAKFANDAGIVSVNWLIASYGLQSIGELMISGLGLAMVAQLVPQRLMGFIMGSWFLTTAGANIIGGYVANLMAVPSDVTDPLMSLEVYGRVFMQIGIATAVIAVLMLLTAPKLNRMTQDDDTAEKGSKAATV.

At 1 to 21 (MSTANKKPTESVSLNAFKQPK) the chain is on the cytoplasmic side. Residues 22–44 (AFYLIFSIELWERFGYYGLQGIM) form a helical membrane-spanning segment. The Periplasmic portion of the chain corresponds to 45 to 59 (AVYLVKQLGMSEADS). Residues 60-80 (ITLFSSFSALVYGLVAIGGWL) traverse the membrane as a helical segment. At 81–89 (GDKILGTKR) the chain is on the cytoplasmic side. Residues 90–110 (VIMLGAVVLAIGYALVAWSGH) form a helical membrane-spanning segment. Position 111 (Asp111) is a topological domain, periplasmic. Residues 112-132 (AGIVYMGMAAIAVGNGLFKAN) form a helical membrane-spanning segment. Residues 133–153 (PSSLLSTCYAKDDPRLDGAFT) lie on the Cytoplasmic side of the membrane. Residues 154–174 (MYYMSVNIGSFFSMLATPWLA) traverse the membrane as a helical segment. At 175 to 178 (ARYG) the chain is on the periplasmic side. A helical transmembrane segment spans residues 179–199 (WSTAFALSVVGMLITVVNFAF). Residues 200-219 (CQRWVKSYGSKPDFEPINFR) lie on the Cytoplasmic side of the membrane. Residues 220 to 240 (NLLLTIVGIVVLIAVATWLLH) traverse the membrane as a helical segment. The Periplasmic portion of the chain corresponds to 241 to 246 (NQDIAR). The chain crosses the membrane as a helical span at residues 247 to 267 (MVLGVIALGIVIIFGKEAFSM). The Cytoplasmic portion of the chain corresponds to 268 to 274 (HGAARRK). The chain crosses the membrane as a helical span at residues 275-295 (MIVAFILMLQAIIFFVLYSQM). At 296-320 (PTSLNFFAIRNVEHSILGIAFEPEQ) the chain is on the periplasmic side. A helical transmembrane segment spans residues 321–341 (YQALNPFWIIIGSPILAAIYN). At 342–352 (RMGDTLPMPMK) the chain is on the cytoplasmic side. Residues 353 to 373 (FAIGMVLCSGAFLILPLGAKF) traverse the membrane as a helical segment. Topologically, residues 374 to 383 (ANDAGIVSVN) are periplasmic. A helical transmembrane segment spans residues 384-404 (WLIASYGLQSIGELMISGLGL). The Cytoplasmic segment spans residues 405–414 (AMVAQLVPQR). Residues 415–435 (LMGFIMGSWFLTTAGANIIGG) traverse the membrane as a helical segment. Residues 436–459 (YVANLMAVPSDVTDPLMSLEVYGR) are Periplasmic-facing. A helical membrane pass occupies residues 460–480 (VFMQIGIATAVIAVLMLLTAP). At 481–501 (KLNRMTQDDDTAEKGSKAATV) the chain is on the cytoplasmic side.

It belongs to the major facilitator superfamily. Proton-dependent oligopeptide transporter (POT/PTR) (TC 2.A.17) family. DtpA subfamily.

Its subcellular location is the cell inner membrane. Its function is as follows. Proton-dependent permease that transports di- and tripeptides. The sequence is that of Dipeptide and tripeptide permease A from Salmonella typhimurium (strain LT2 / SGSC1412 / ATCC 700720).